The chain runs to 440 residues: MVTMCGGHRPENFLHQVLTEFGEELAGEGKSEVGGGAPRSYLQVASAECWAAAPAVHVGEPVHAGGLHTERGADPVIGLYLVHRGGACQTPTVGNRQTPTLGIHARPRRRATTSLLTLLLAFGKNAVRCALIGPGSLTSRTRPLTEPLGEKERREVFFPPRPERVEHNVESSRWEPRRRGACGSRGGNFPSPRGGSGVASLERAESSSTEPAKAIKPIDRKSVHQICSGPVVPSLSTAVKELVENSLDAGATNIDLKLKDYGVDLIEVSGNGCGVEEENFEGLTLKHHTSKIQEFADLPQVETFGFRGEALSSLCALSDVTISTCHVSAKVGTRLVFDHYGKIIQKTPYPHPRGMTVSVKQLFSTLPVHHKEFQRNIKKKRACFPFAFCRDCQFPEASPAMLPVQPAELTPRSTPPHPCSLEDNVITVFSSVKNGPGSSR.

A compositionally biased stretch (basic and acidic residues) spans 164–178 (RVEHNVESSRWEPRR). The segment at 164–215 (RVEHNVESSRWEPRRRGACGSRGGNFPSPRGGSGVASLERAESSSTEPAKAI) is disordered. The Histidine kinase domain maps to 230 to 364 (PVVPSLSTAV…MTVSVKQLFS (135 aa)).

It belongs to the DNA mismatch repair MutL/HexB family. As to expression, highly expressed in kidney, spleen, adrenal gland, ovary and cerebellum and to a lower extent in liver, esophagus, stomach, duodenum, colon, bladder, uterus, lung, pancreas and cerebrum. Not expressed in heart.

The chain is Putative postmeiotic segregation increased 2-like protein 1 (PMS2P1) from Homo sapiens (Human).